The sequence spans 431 residues: Tryptophan synthase beta chain (431 aa).

Lys109 bears the N6-(pyridoxal phosphate)lysine mark.

The protein belongs to the TrpB family. In terms of assembly, tetramer of two alpha and two beta chains. The cofactor is pyridoxal 5'-phosphate.

It carries out the reaction (1S,2R)-1-C-(indol-3-yl)glycerol 3-phosphate + L-serine = D-glyceraldehyde 3-phosphate + L-tryptophan + H2O. It functions in the pathway amino-acid biosynthesis; L-tryptophan biosynthesis; L-tryptophan from chorismate: step 5/5. Functionally, the beta subunit is responsible for the synthesis of L-tryptophan from indole and L-serine. The sequence is that of Tryptophan synthase beta chain from Deinococcus radiodurans (strain ATCC 13939 / DSM 20539 / JCM 16871 / CCUG 27074 / LMG 4051 / NBRC 15346 / NCIMB 9279 / VKM B-1422 / R1).